A 386-amino-acid polypeptide reads, in one-letter code: Probable zinc transporter zrg17 (386 aa).

6 helical membrane-spanning segments follow: residues 102–122, 128–148, 163–183, 208–228, 243–263, and 268–288; these read ILFF…ILLT, IVEG…SFLV, MELL…MNLL, VHIH…FALL, FFHG…SLGY, and FLSH…GFSI.

This sequence belongs to the cation diffusion facilitator (CDF) transporter (TC 2.A.4) family. SLC30A subfamily. Interacts with cis4.

Its subcellular location is the cytoplasm. The protein resides in the nucleus membrane. Its function is as follows. Probable transporter involved in the regulation of zinc homeostasis. The sequence is that of Probable zinc transporter zrg17 (zrg17) from Schizosaccharomyces pombe (strain 972 / ATCC 24843) (Fission yeast).